Reading from the N-terminus, the 123-residue chain is Guanine nucleotide exchange factor MSS4 (123 aa).

An N-acetylmethionine modification is found at Met1. The region spanning 9 to 123 is the MSS4 domain; sequence ELVSAEGRNR…YVALERVSHE (115 aa). Positions 23, 26, 94, and 97 each coordinate Zn(2+).

It belongs to the DSS4/MSS4 family. Interacts with RAB8A. As to expression, ubiquitous.

Guanine-nucleotide-releasing protein that acts on members of the SEC4/YPT1/RAB subfamily. Stimulates GDP release from both YPT1, RAB3A and RAB10, but is less active on these proteins than on the SEC4 protein. Might play a general role in vesicular transport. The chain is Guanine nucleotide exchange factor MSS4 (RABIF) from Homo sapiens (Human).